Reading from the N-terminus, the 186-residue chain is Putative thiamine-phosphate synthase 2 (186 aa).

Residues 35–39 (QLREK) and N67 contribute to the 4-amino-2-methyl-5-(diphosphooxymethyl)pyrimidine site. E68 contacts Mg(2+). S105 is a binding site for 4-amino-2-methyl-5-(diphosphooxymethyl)pyrimidine. A 2-[(2R,5Z)-2-carboxy-4-methylthiazol-5(2H)-ylidene]ethyl phosphate-binding site is contributed by 131–133 (TSS). H134 lines the 4-amino-2-methyl-5-(diphosphooxymethyl)pyrimidine pocket. Residues G161 and 181–182 (IS) contribute to the 2-[(2R,5Z)-2-carboxy-4-methylthiazol-5(2H)-ylidene]ethyl phosphate site.

Belongs to the thiamine-phosphate synthase family. Requires Mg(2+) as cofactor.

It catalyses the reaction 2-[(2R,5Z)-2-carboxy-4-methylthiazol-5(2H)-ylidene]ethyl phosphate + 4-amino-2-methyl-5-(diphosphooxymethyl)pyrimidine + 2 H(+) = thiamine phosphate + CO2 + diphosphate. It carries out the reaction 2-(2-carboxy-4-methylthiazol-5-yl)ethyl phosphate + 4-amino-2-methyl-5-(diphosphooxymethyl)pyrimidine + 2 H(+) = thiamine phosphate + CO2 + diphosphate. The catalysed reaction is 4-methyl-5-(2-phosphooxyethyl)-thiazole + 4-amino-2-methyl-5-(diphosphooxymethyl)pyrimidine + H(+) = thiamine phosphate + diphosphate. Its pathway is cofactor biosynthesis; thiamine diphosphate biosynthesis; thiamine phosphate from 4-amino-2-methyl-5-diphosphomethylpyrimidine and 4-methyl-5-(2-phosphoethyl)-thiazole: step 1/1. Condenses 4-methyl-5-(beta-hydroxyethyl)thiazole monophosphate (THZ-P) and 2-methyl-4-amino-5-hydroxymethyl pyrimidine pyrophosphate (HMP-PP) to form thiamine monophosphate (TMP). This is Putative thiamine-phosphate synthase 2 (thiE2) from Aquifex aeolicus (strain VF5).